A 138-amino-acid polypeptide reads, in one-letter code: Large ribosomal subunit protein uL16 (138 aa).

Basic residues predominate over residues 1–15 (MLSPKKVKYRKKQRG). The interval 1–21 (MLSPKKVKYRKKQRGRLSGEA) is disordered.

This sequence belongs to the universal ribosomal protein uL16 family. Part of the 50S ribosomal subunit.

In terms of biological role, binds 23S rRNA and is also seen to make contacts with the A and possibly P site tRNAs. The polypeptide is Large ribosomal subunit protein uL16 (Borrelia garinii subsp. bavariensis (strain ATCC BAA-2496 / DSM 23469 / PBi) (Borreliella bavariensis)).